A 162-amino-acid chain; its full sequence is Caveolin-2 (162 aa).

At 1-86 (MGLETEKADV…FEISKYVMYK (86 aa)) the chain is on the cytoplasmic side. Residue tyrosine 19 is modified to Phosphotyrosine; by SRC. At serine 20 the chain carries Phosphoserine. Position 27 is a phosphotyrosine; by SRC (tyrosine 27). Serine 36 is subject to Phosphoserine. The helical intramembrane region spans 87–107 (FLTVFLAIPLAFAAGILFATL). Residues 108–162 (SCLHIWIIMPFVKTCLMVLPSVQTIWKSVTDVIIAPLCTSVGRSLSSISLQLSHD) lie on the Cytoplasmic side of the membrane.

The protein belongs to the caveolin family. In terms of assembly, monomer or homodimer. Interacts with CAV1; the interaction forms a stable heterooligomeric complex that is required for targeting to lipid rafts and for caveolae formation. Tyrosine phosphorylated forms do not form heterooligomers with the Tyr-19-phosphorylated form existing as a monomer or dimer, and the Tyr-27-form as a monomer only. Interacts (tyrosine phosphorylated form) with the SH2 domain-containing proteins, RASA1, NCK1 and SRC. Interacts (tyrosine phosphorylated form) with INSR, the interaction (Tyr-27-phosphorylated form) is increased on insulin stimulation. Interacts (Tyr-19 phosphorylated form) with MAPK1 (phosphorylated form); the interaction, promoted by insulin, leads to nuclear location and MAPK1 activation. Interacts with STAT3; the interaction is increased on insulin-induced tyrosine phosphorylation leading to STAT activation. In terms of processing, phosphorylated on serine and tyrosine residues. Phosphorylation on Ser-36 appears to modulate mitosis in endothelial cells. Phosphorylation on both Tyr-19 and Tyr-27 is required for insulin-induced 'Ser-727' phosphorylation of STAT3 and its activation. Phosphorylation on Tyr-19 is required for insulin-induced phosphorylation of MAPK1 and DNA binding of STAT3. Tyrosine phosphorylation is induced by both EGF and insulin.

Its subcellular location is the nucleus. The protein localises to the cytoplasm. The protein resides in the golgi apparatus membrane. It is found in the cell membrane. It localises to the membrane. Its subcellular location is the caveola. Its function is as follows. May act as a scaffolding protein within caveolar membranes. Interacts directly with G-protein alpha subunits and can functionally regulate their activity. Acts as an accessory protein in conjunction with CAV1 in targeting to lipid rafts and driving caveolae formation. The Ser-36 phosphorylated form has a role in modulating mitosis in endothelial cells. Positive regulator of cellular mitogenesis of the MAPK signaling pathway. Required for the insulin-stimulated nuclear translocation and activation of MAPK1 and STAT3, and the subsequent regulation of cell cycle progression. This is Caveolin-2 (CAV2) from Eulemur macaco macaco (Black lemur).